The sequence spans 359 residues: Chorismate synthase (359 aa).

R47 is a binding site for NADP(+). Residues 123-125 (RSS), G283, 298-302 (KPTSS), and R326 each bind FMN.

Belongs to the chorismate synthase family. Homotetramer. The cofactor is FMNH2.

It carries out the reaction 5-O-(1-carboxyvinyl)-3-phosphoshikimate = chorismate + phosphate. Its pathway is metabolic intermediate biosynthesis; chorismate biosynthesis; chorismate from D-erythrose 4-phosphate and phosphoenolpyruvate: step 7/7. Functionally, catalyzes the anti-1,4-elimination of the C-3 phosphate and the C-6 proR hydrogen from 5-enolpyruvylshikimate-3-phosphate (EPSP) to yield chorismate, which is the branch point compound that serves as the starting substrate for the three terminal pathways of aromatic amino acid biosynthesis. This reaction introduces a second double bond into the aromatic ring system. The chain is Chorismate synthase from Chlamydia felis (strain Fe/C-56) (Chlamydophila felis).